The primary structure comprises 501 residues: Ell-associated factor Eaf (501 aa).

Composition is skewed to polar residues over residues 138-149 (NMGQGQLHSQGA) and 173-192 (ENST…SRRN). Disordered stretches follow at residues 138-226 (NMGQ…PAWD) and 256-501 (GHAN…DDDD). 2 stretches are compositionally biased toward low complexity: residues 200–221 (RNSP…SPQS) and 256–270 (GHAN…SATG). Ser202 is modified (phosphoserine). A compositionally biased stretch (polar residues) spans 271–283 (QTDFGSISSSSHI). Composition is skewed to low complexity over residues 302–314 (QRQS…QQQP) and 329–343 (QQQR…QRPP). Positions 393–408 (DSSDSDSGSDSDDSTE) are enriched in acidic residues. Low complexity-rich tracts occupy residues 416 to 437 (QQPV…HLNQ), 455 to 471 (QQQQ…QKQQ), and 483 to 501 (NDLL…DDDD).

This sequence belongs to the EAF family.

Its subcellular location is the nucleus. Its function is as follows. Promotes transcriptional elongation by Su(Tpl)/ELL. Essential for development. The protein is Ell-associated factor Eaf of Drosophila yakuba (Fruit fly).